The sequence spans 468 residues: 6-phosphogluconate dehydrogenase, decarboxylating (468 aa).

Residues 9–14 (GLAVMG), 32–34 (NRS), 73–75 (VQA), and N101 each bind NADP(+). Substrate-binding positions include N101 and 127 to 129 (SGG). Residue K182 is the Proton acceptor of the active site. 185 to 186 (HN) is a binding site for substrate. E189 acts as the Proton donor in catalysis. Substrate is bound by residues Y190, K259, R286, R444, and H450.

It belongs to the 6-phosphogluconate dehydrogenase family. Homodimer.

The catalysed reaction is 6-phospho-D-gluconate + NADP(+) = D-ribulose 5-phosphate + CO2 + NADPH. Its pathway is carbohydrate degradation; pentose phosphate pathway; D-ribulose 5-phosphate from D-glucose 6-phosphate (oxidative stage): step 3/3. Functionally, catalyzes the oxidative decarboxylation of 6-phosphogluconate to ribulose 5-phosphate and CO(2), with concomitant reduction of NADP to NADPH. This is 6-phosphogluconate dehydrogenase, decarboxylating (gnd) from Staphylococcus aureus (strain Mu50 / ATCC 700699).